The sequence spans 120 residues: NAD(P)H-quinone oxidoreductase subunit 3, chloroplastic (120 aa).

3 helical membrane-spanning segments follow: residues 9 to 29, 64 to 84, and 88 to 108; these read IFWA…LISG, MFAL…PWAM, and VLGV…ILGL.

The protein belongs to the complex I subunit 3 family. NDH is composed of at least 16 different subunits, 5 of which are encoded in the nucleus.

It is found in the plastid. The protein localises to the chloroplast thylakoid membrane. The enzyme catalyses a plastoquinone + NADH + (n+1) H(+)(in) = a plastoquinol + NAD(+) + n H(+)(out). The catalysed reaction is a plastoquinone + NADPH + (n+1) H(+)(in) = a plastoquinol + NADP(+) + n H(+)(out). Its function is as follows. NDH shuttles electrons from NAD(P)H:plastoquinone, via FMN and iron-sulfur (Fe-S) centers, to quinones in the photosynthetic chain and possibly in a chloroplast respiratory chain. The immediate electron acceptor for the enzyme in this species is believed to be plastoquinone. Couples the redox reaction to proton translocation, and thus conserves the redox energy in a proton gradient. This is NAD(P)H-quinone oxidoreductase subunit 3, chloroplastic from Arabis hirsuta (Hairy rock-cress).